We begin with the raw amino-acid sequence, 724 residues long: Probable metal-nicotianamine transporter YSL13 (724 aa).

Residues 1-54 (MATVPTPSEAHGGATPTAADVEMVEASELRRRGKPSGDRATGPSRDGAAAAAEE) form a disordered region. 14 consecutive transmembrane segments (helical) span residues 80–100 (AFVV…KLNL), 103–123 (GIIP…VRLW), 148–168 (CVVA…ILSM), 190–210 (LGWI…GLVP), 252–272 (LGIF…YTAT), 310–330 (IVNV…WPLI), 355–375 (VFIA…KMII), 423–443 (IPWY…IGTV), 455–475 (ILVA…GTGL), 487–507 (LAIF…LAGL), 541–561 (FVSQ…VFWL), 603–623 (LNLC…RDLV), 640–660 (FYIG…LFVW), and 675–695 (VASG…VLAL).

It belongs to the YSL (TC 2.A.67.2) family. In terms of tissue distribution, expressed in leaves and at low levels in root cortex.

The protein resides in the membrane. Its function is as follows. May be involved in the transport of nicotianamine-chelated metals. The sequence is that of Probable metal-nicotianamine transporter YSL13 (YSL13) from Oryza sativa subsp. japonica (Rice).